The primary structure comprises 85 residues: Putative membrane protein insertion efficiency factor (85 aa).

The disordered stretch occupies residues 62–85 (KGGFDPVPLKKDKSASKHSHKHNH).

Belongs to the UPF0161 family.

The protein localises to the cell membrane. Functionally, could be involved in insertion of integral membrane proteins into the membrane. The protein is Putative membrane protein insertion efficiency factor of Staphylococcus aureus (strain Mu3 / ATCC 700698).